The primary structure comprises 460 residues: Ribosomal protein uS12 methylthiotransferase RimO (460 aa).

The MTTase N-terminal domain maps to 17-128 (PAVAVLHLGC…IVQVIQRAER (112 aa)). 6 residues coordinate [4Fe-4S] cluster: Cys26, Cys62, Cys91, Cys166, Cys170, and Cys173. Positions 152–381 (TTHAPVAYLR…MQLQQGIAFR (230 aa)) constitute a Radical SAM core domain. Positions 384–450 (REQVGQVVPV…PYDLFGQVVE (67 aa)) constitute a TRAM domain.

It belongs to the methylthiotransferase family. RimO subfamily. [4Fe-4S] cluster is required as a cofactor.

The protein localises to the cytoplasm. It catalyses the reaction L-aspartate(89)-[ribosomal protein uS12]-hydrogen + (sulfur carrier)-SH + AH2 + 2 S-adenosyl-L-methionine = 3-methylsulfanyl-L-aspartate(89)-[ribosomal protein uS12]-hydrogen + (sulfur carrier)-H + 5'-deoxyadenosine + L-methionine + A + S-adenosyl-L-homocysteine + 2 H(+). Functionally, catalyzes the methylthiolation of an aspartic acid residue of ribosomal protein uS12. This Synechococcus sp. (strain JA-3-3Ab) (Cyanobacteria bacterium Yellowstone A-Prime) protein is Ribosomal protein uS12 methylthiotransferase RimO.